The primary structure comprises 473 residues: GTPase Der (473 aa).

EngA-type G domains follow at residues 5–170 (PVVA…PEDV) and 178–351 (LKLA…ASSM). Residues 11 to 18 (GRPNVGKS), 58 to 62 (DTGGI), 123 to 126 (NKID), 184 to 191 (GRPNVGKS), 231 to 235 (DTAGV), and 296 to 299 (NKWD) each bind GTP. Positions 352-436 (FKVSTNRLTQ…PLKVEFKLNT (85 aa)) constitute a KH-like domain. The segment at 438 to 473 (PYAGKKTTSSKKLRPGVSEARQKRRNMKYKKGSHKK) is disordered. Residues 459–473 (QKRRNMKYKKGSHKK) show a composition bias toward basic residues.

The protein belongs to the TRAFAC class TrmE-Era-EngA-EngB-Septin-like GTPase superfamily. EngA (Der) GTPase family. Associates with the 50S ribosomal subunit.

In terms of biological role, GTPase that plays an essential role in the late steps of ribosome biogenesis. In Psychrobacter sp. (strain PRwf-1), this protein is GTPase Der.